The primary structure comprises 397 residues: S-layer protein B (397 aa).

A signal peptide spans 1–24 (MVVKKTFVLSTLILISVVALVSTA). The stretch at 259-314 (INALNNEVSTLRSEISSLNSTIASLNKSLANANTQISNLQSEITTLNSEIGKLNST) forms a coiled coil. The chain crosses the membrane as a helical span at residues 373 to 393 (GGIIAGIIGLIVAIVAIVLVM).

It belongs to the Sulfolobales SlaB family. The mushroom-shaped unit cells of the Sulfolobales' S-layers may consist of three SlaB subunits and six SlaA subunits.

It localises to the secreted. Its subcellular location is the cell wall. The protein resides in the S-layer. It is found in the cell membrane. S-layer small protein. May anchor the complex to the cell membrane. This is S-layer protein B from Saccharolobus solfataricus (strain ATCC 35092 / DSM 1617 / JCM 11322 / P2) (Sulfolobus solfataricus).